We begin with the raw amino-acid sequence, 39 residues long: Fuctinin-3 (39 aa).

Residues 1–39 (KELNSNHDGADETSEKEQQEAIEHIDEVQNEIDRLNETA) form a disordered region.

The protein to human SET/PHAPII protein. Oligomer.

It is found in the cytoplasm. Has a role in the physiological regulation of fucosylation processes. This chain is Fuctinin-3, found in Rattus norvegicus (Rat).